A 154-amino-acid chain; its full sequence is Cyanate hydratase (154 aa).

Catalysis depends on residues R100, E103, and S126.

This sequence belongs to the cyanase family.

It carries out the reaction cyanate + hydrogencarbonate + 3 H(+) = NH4(+) + 2 CO2. In terms of biological role, catalyzes the reaction of cyanate with bicarbonate to produce ammonia and carbon dioxide. This Aspergillus clavatus (strain ATCC 1007 / CBS 513.65 / DSM 816 / NCTC 3887 / NRRL 1 / QM 1276 / 107) protein is Cyanate hydratase.